The chain runs to 504 residues: ATP synthase subunit alpha, chloroplastic (504 aa).

170–177 (GDRQTGKT) contacts ATP.

The protein belongs to the ATPase alpha/beta chains family. In terms of assembly, F-type ATPases have 2 components, CF(1) - the catalytic core - and CF(0) - the membrane proton channel. CF(1) has five subunits: alpha(3), beta(3), gamma(1), delta(1), epsilon(1). CF(0) has four main subunits: a, b, b' and c.

The protein localises to the plastid. It localises to the chloroplast thylakoid membrane. It carries out the reaction ATP + H2O + 4 H(+)(in) = ADP + phosphate + 5 H(+)(out). Produces ATP from ADP in the presence of a proton gradient across the membrane. The alpha chain is a regulatory subunit. In Porphyra purpurea (Red seaweed), this protein is ATP synthase subunit alpha, chloroplastic.